Consider the following 320-residue polypeptide: Methionyl-tRNA formyltransferase (320 aa).

114-117 (SLLP) serves as a coordination point for (6S)-5,6,7,8-tetrahydrofolate.

Belongs to the Fmt family.

The catalysed reaction is L-methionyl-tRNA(fMet) + (6R)-10-formyltetrahydrofolate = N-formyl-L-methionyl-tRNA(fMet) + (6S)-5,6,7,8-tetrahydrofolate + H(+). Functionally, attaches a formyl group to the free amino group of methionyl-tRNA(fMet). The formyl group appears to play a dual role in the initiator identity of N-formylmethionyl-tRNA by promoting its recognition by IF2 and preventing the misappropriation of this tRNA by the elongation apparatus. This chain is Methionyl-tRNA formyltransferase, found in Acinetobacter baumannii (strain AB307-0294).